A 137-amino-acid polypeptide reads, in one-letter code: DNA-binding protein H-NS (137 aa).

A DNA-binding region spans residues 112–117; that stretch reads QGRTPA.

Belongs to the histone-like protein H-NS family. Homodimer that oligomerizes on DNA into higher-order complexes that form bridges between disparate regions of DNA compacting it. Interacts with Hha, YdgT and StpA.

Its subcellular location is the cytoplasm. The protein resides in the nucleoid. In terms of biological role, a DNA-binding protein implicated in transcriptional repression and chromosome organization and compaction. Binds nucleation sites in AT-rich DNA and bridges them, forming higher-order nucleoprotein complexes and condensing the chromosome. As many horizontally transferred genes are AT-rich, it plays a central role in silencing foreign genes. A subset of genes are repressed by H-NS in association with other proteins. The protein is DNA-binding protein H-NS (hns) of Salmonella paratyphi A (strain ATCC 9150 / SARB42).